A 400-amino-acid chain; its full sequence is S-adenosylmethionine synthase (400 aa).

H17 provides a ligand contact to ATP. D19 is a Mg(2+) binding site. E45 contacts K(+). 2 residues coordinate L-methionine: E58 and Q101. The segment at 101–111 is flexible loop; that stretch reads QSADIAMGVDQ. ATP contacts are provided by residues 177 to 179, 244 to 245, D253, 259 to 260, A276, and K280; these read DGK, RF, and RK. Position 253 (D253) interacts with L-methionine. L-methionine is bound at residue K284.

Belongs to the AdoMet synthase family. Homotetramer; dimer of dimers. Mg(2+) serves as cofactor. It depends on K(+) as a cofactor.

The protein resides in the cytoplasm. It carries out the reaction L-methionine + ATP + H2O = S-adenosyl-L-methionine + phosphate + diphosphate. It participates in amino-acid biosynthesis; S-adenosyl-L-methionine biosynthesis; S-adenosyl-L-methionine from L-methionine: step 1/1. Functionally, catalyzes the formation of S-adenosylmethionine (AdoMet) from methionine and ATP. The overall synthetic reaction is composed of two sequential steps, AdoMet formation and the subsequent tripolyphosphate hydrolysis which occurs prior to release of AdoMet from the enzyme. The sequence is that of S-adenosylmethionine synthase from Bacillus subtilis (strain 168).